The sequence spans 486 residues: N-succinylglutamate 5-semialdehyde dehydrogenase (486 aa).

220–225 contributes to the NAD(+) binding site; that stretch reads GSSRTG. Active-site residues include glutamate 243 and cysteine 277.

It belongs to the aldehyde dehydrogenase family. AstD subfamily.

The enzyme catalyses N-succinyl-L-glutamate 5-semialdehyde + NAD(+) + H2O = N-succinyl-L-glutamate + NADH + 2 H(+). It functions in the pathway amino-acid degradation; L-arginine degradation via AST pathway; L-glutamate and succinate from L-arginine: step 4/5. In terms of biological role, catalyzes the NAD-dependent reduction of succinylglutamate semialdehyde into succinylglutamate. In Shewanella sediminis (strain HAW-EB3), this protein is N-succinylglutamate 5-semialdehyde dehydrogenase.